The chain runs to 1336 residues: MENLPAVTTEEPTPMGRGPVGPSGGGSTRDQVRTVVMRPSVSWEKAGPEEAKAPVRGDEAPPARVAGPAAGTPPCQMGVYPTDLTLQLLAVRRKSRLRDPGLQQTLRGQLRLLENDSREMARVLGELSARLLSIHSDQDRIVVTFKTFEEIWKFSTYHALGFTHHCLANLLMDQAFWLLLPSEEEETAIQVHVDENALRLTHESLLIQEGPFFVLCPDHHVRVMTGPRDAGNGPQALRQASGAPQGEAAPETDSSPPSPSVSSEEVAVAAAPEPLIPFHQWALRIPQDPIDDAMGGPVMPGNPLMAVGLASALADFQGSGPEEMTFRGGDLIEILGAQVPSLPWCVGRHAASGRVGFVRSSLISMQGPVSELESAIFLNEEEKSFFSEGCFSEEDARQLLRRMSGTDVCSVYSLDSVEEAETEQPQEKEIPPPCLSLEPQETLQKVKNVLEQCKTCPGCPQEPASWGLCAASSDVSLQDPEEPSFCLEAEDDWEDPEALSSLLLFLNAPGYKASFRGLYDVALPWLSSVFRSFSDEEELTGRLAQARGAAKKAGLLMALARLCFLLGRLCSRRLKLSQARVYFEEALGALEGSFGDLFLVVAVYANLASIYRKQKNREKCAQVVPKAMALLLGTPDHICSTEAEGELLQLALRRAVGGQSLQAEARACFLLARHHVHLKQPEEALPFLERLLLLHRDSGAPEAAWLSDCYLLLADIYSRKCLPHLVLSCVKVASLRTRGSLAGSLRSVNLVLQNAPQPHSLPAQTSHYLRQALASLTPGTGQALRGPLYTSLAQLYSHHGCHGPAITFMTQAVEASAIAGVRAIVDHLVALAWLHVLHGQSPVALDILQSVRDAVVASEDQEGVIANMVAVALKRTGRTRQAAESYYRALRVARDLGQQRNQAVGLANFGALCLHAGASRLAQHYLLEAVRLFSRLPLGECGRDFTHVLLQLGHLCTRQGPAQQGKGYYEWALLVAVEMGHVESQLRAVQRLCHFYSAVMPSEAQCVIYHELQLSLACKVADKVLEGQLLETISQLYLSLGTERAYKSALDYTKRSLGIFIDLQKKEKEAHAWLQAGKIYYILRQSELVDLYIQVAQNVALYTGDPNLGLELFEAAGDIFFDGAWEREKAVSFYRDRALPLAVTTGNRKAELRLCNKLVALLATLEEPQEGLEFAHMALALSITLGDRLNERVAYHRLAALQHRLGHGELAEHFYLKALSLCNSPLEFDEETLYYVKVYLVLGDIIFYDLKDPFDAAGYYQLALAAAVDLGNKKAQLKIYTRLATIYHNFLLDREKSLFFYQKARTFATELNVRRVNLPPLPLCGWAPWLAPSHPR.

M1 is subject to N-acetylmethionine. 2 disordered regions span residues 1-76 (MENL…PPCQ) and 225-266 (TGPR…SEEV). The span at 18 to 27 (GPVGPSGGGS) shows a compositional bias: gly residues. The span at 46 to 61 (AGPEEAKAPVRGDEAP) shows a compositional bias: basic and acidic residues. Composition is skewed to low complexity over residues 62-74 (PARVAGPAAGTPP) and 247-266 (EAAPETDSSPPSPSVSSEEV). The region spanning 305–368 (MAVGLASALA…RSSLISMQGP (64 aa)) is the SH3 domain. 8 TPR repeats span residues 560–593 (ARLCFLLGRLCSRRLKLSQARVYFEEALGALEGS), 601–634 (VAVYANLASIYRKQKNREKCAQVVPKAMALLLGT), 665–698 (ARACFLLARHHVHLKQPEEALPFLERLLLLHRDS), 786–819 (GPLYTSLAQLYSHHGCHGPAITFMTQAVEASAIA), 863–896 (GVIANMVAVALKRTGRTRQAAESYYRALRVARDL), 946–979 (THVLLQLGHLCTRQGPAQQGKGYYEWALLVAVEM), 1027–1063 (GQLLETISQLYLSLGTERAYKSALDYTKRSLGIFIDL), and 1192–1225 (RVAYHRLAALQHRLGHGELAEHFYLKALSLCNSP). Y1248 is subject to Phosphotyrosine. A TPR 9 repeat occupies 1277–1311 (LKIYTRLATIYHNFLLDREKSLFFYQKARTFATEL).

In Homo sapiens (Human), this protein is SH3 domain and tetratricopeptide repeat-containing protein 1 (SH3TC1).